The primary structure comprises 154 residues: uncharacterized protein (154 aa).

The next 4 membrane-spanning stretches (helical) occupy residues 39–61 (LLIF…FFAR), 65–87 (LPYI…VSLL), 94–113 (VESL…RVFI), and 128–150 (LLIN…SPFT).

Its subcellular location is the cell membrane. This is an uncharacterized protein from Aquifex aeolicus (strain VF5).